The sequence spans 145 residues: Brain and acute leukemia cytoplasmic protein (145 aa).

G2 is lipidated: N-myristoyl glycine. A lipid anchor (S-palmitoyl cysteine) is attached at C3. Positions 3-35 (CGGSRADAIEPRYYESWTRETESTWLTYTDSDA) are interaction with CAMK2A. Disordered regions lie at residues 36 to 56 (LPSA…AGVL) and 87 to 109 (CPNS…WATE). A compositionally biased stretch (polar residues) spans 87-105 (CPNSQNLSSGPLTQKQNGL).

In terms of assembly, interacts with CAMK2A. Post-translationally, palmitoylation and myristoylation target the protein to the lipid rafts. As to expression, at the mRNA level, predominantly expressed in the brain. At the protein level, mainly expressed in muscle tissues. In skeletal muscles, expressed in cranial and facial muscles, muscles of the neck, back, thoracic wall, and thigh. Also found in the contractile myoepithelial cell layer of salivary glands. In smooth muscles, expressed in the gastric wall, uterus, urinary bladder, as well as in the muscular lining around seminiferous tubules, prostatic ducts, epididymis, vas deferens, walls of small blood vessels in the dermis, and fascial layers between muscle fibers, brain, and around the spinal cord. Strongly expressed in myocardium. High expression levels are observed in placental spongiotrophoblast and adjacent myometrium. Also expressed in bone marrow hematopoietic cells. In the mature thymus, expressed in rare scattered cells. Weakly expressed in the brain neuropil, particularly near the hippocampus, and spinal cord white matter. Not detected in skin keratinocytes or lung (at protein level).

The protein resides in the cytoplasm. It localises to the synapse. The protein localises to the synaptosome. Its subcellular location is the membrane raft. It is found in the postsynaptic density. May play a synaptic role at the postsynaptic lipid rafts possibly through interaction with CAMK2A. The protein is Brain and acute leukemia cytoplasmic protein (Baalc) of Mus musculus (Mouse).